Consider the following 288-residue polypeptide: Type II iodothyronine deiodinase (288 aa).

Residues 1 to 5 (MPHVN) are Lumenal-facing. The chain crosses the membrane as a helical; Signal-anchor for type III membrane protein span at residues 6-26 (LLVVLLILPGVFSNCLFLALY). The Cytoplasmic portion of the chain corresponds to 27-288 (DAVSFLRRAL…SFLESVKASR (262 aa)). The interval 99-130 (SCAASSSSSHETPTPRTTAEAAATVTTSTTTT) is disordered. The active site involves selenocysteine 160. Position 160 (selenocysteine 160) is a non-standard amino acid, selenocysteine.

The protein belongs to the iodothyronine deiodinase family. In terms of assembly, predominantly monomer. Can form homodimers but homodimerization is not essential for enzyme activity. In terms of tissue distribution, expressed in intestine, liver, kidney and brain of immediately premetamorphic larvae, of larvae in all stages of metamorphosis and of parasitic feeding juveniles. In immediately premetamorphic larvae, levels are significantly higher in intestine and liver than in kidney and brain.

It is found in the endoplasmic reticulum membrane. It carries out the reaction 3,3',5-triiodo-L-thyronine + iodide + A + H(+) = L-thyroxine + AH2. The enzyme catalyses 3,3'-diiodo-L-thyronine + iodide + A + H(+) = 3,3',5'-triiodo-L-thyronine + AH2. It catalyses the reaction 3'-iodo-L-thyronine + iodide + A + H(+) = 3',5'-diiodo-L-thyronine + AH2. The catalysed reaction is 3,3'-diiodothyronamine + iodide + A + H(+) = 3,3',5'-triiodothyronamine + AH2. It carries out the reaction 3'-iodothyronamine + iodide + A + H(+) = 3',5'-diiodothyronamine + AH2. Its function is as follows. Plays a crucial role in the metabolism of thyroid hormones (TH) and has specific roles in TH activation and inactivation by deiodination. Catalyzes the deiodination of L-thyroxine (T4) to 3,5,3'-triiodothyronine (T3), 3,3',5'-triiodothyronine (rT3) to 3,3'-diiodothyronine (3,3'-T2) and 3',5'-diiodothyronine (3',5'-T2) to 3'-monoiodothyronine (3'-T1) via outer-ring deiodination (ORD). Catalyzes the phenolic ring deiodinations of 3,3',5'-triiodothyronamine and 3',5'- diiodothyronamine. This Petromyzon marinus (Sea lamprey) protein is Type II iodothyronine deiodinase.